We begin with the raw amino-acid sequence, 177 residues long: Adenine phosphoribosyltransferase (177 aa).

This sequence belongs to the purine/pyrimidine phosphoribosyltransferase family. In terms of assembly, homodimer.

The protein resides in the cytoplasm. It catalyses the reaction AMP + diphosphate = 5-phospho-alpha-D-ribose 1-diphosphate + adenine. The protein operates within purine metabolism; AMP biosynthesis via salvage pathway; AMP from adenine: step 1/1. In terms of biological role, catalyzes a salvage reaction resulting in the formation of AMP, that is energically less costly than de novo synthesis. In Chlorobium chlorochromatii (strain CaD3), this protein is Adenine phosphoribosyltransferase.